Consider the following 341-residue polypeptide: Probable membrane-associated kinase regulator 1 (341 aa).

Disordered regions lie at residues 1–29 (MRRQ…FEFN), 67–122 (TLGS…SSRP), 158–185 (PKTN…KRMS), 206–230 (LSPK…NNIR), and 288–310 (RGGF…SVSS). 3 stretches are compositionally biased toward low complexity: residues 12–29 (PPQS…FEFN), 67–108 (TLGS…SFPL), and 167–180 (SSSS…APSS). The segment covering 208–230 (PKQSSNIKTESSSSLKDSGNNIR) has biased composition (polar residues). Residues 297–310 (SCSSSSSNNNSVSS) are compositionally biased toward low complexity.

In terms of assembly, a C-terminus-derived peptide binds BRI1 in vitro.

Its subcellular location is the cell membrane. Its function is as follows. May negatively regulate brassinosteroid signaling. The protein is Probable membrane-associated kinase regulator 1 (MAKR1) of Arabidopsis thaliana (Mouse-ear cress).